A 270-amino-acid chain; its full sequence is Glucosamine-6-phosphate deaminase (270 aa).

Asp72 functions as the Proton acceptor; for enolization step in the catalytic mechanism. Asp141 (for ring-opening step) is an active-site residue. His143 serves as the catalytic Proton acceptor; for ring-opening step. Residue Glu148 is the For ring-opening step of the active site.

The protein belongs to the glucosamine/galactosamine-6-phosphate isomerase family. NagB subfamily.

The catalysed reaction is alpha-D-glucosamine 6-phosphate + H2O = beta-D-fructose 6-phosphate + NH4(+). Its pathway is amino-sugar metabolism; N-acetylneuraminate degradation; D-fructose 6-phosphate from N-acetylneuraminate: step 5/5. With respect to regulation, allosterically activated by N-acetylglucosamine 6-phosphate (GlcNAc6P). Its function is as follows. Catalyzes the reversible isomerization-deamination of glucosamine 6-phosphate (GlcN6P) to form fructose 6-phosphate (Fru6P) and ammonium ion. This chain is Glucosamine-6-phosphate deaminase, found in Parabacteroides distasonis (strain ATCC 8503 / DSM 20701 / CIP 104284 / JCM 5825 / NCTC 11152).